The primary structure comprises 495 residues: Membrane-bound lytic murein transglycosylase F (495 aa).

Positions 1–29 (MEIRKLSLSTIRSIITSLSVLVLVISASA) are cleaved as a signal peptide. The segment at 30–273 (TLVRSTPPNV…VTKHFFERHI (244 aa)) is non-LT domain. The segment at 274-495 (DEVTTGEAMV…TAAQGENLSL (222 aa)) is LT domain. Glu320 is a catalytic residue.

It in the N-terminal section; belongs to the bacterial solute-binding protein 3 family. In the C-terminal section; belongs to the transglycosylase Slt family.

The protein localises to the cell outer membrane. The enzyme catalyses Exolytic cleavage of the (1-&gt;4)-beta-glycosidic linkage between N-acetylmuramic acid (MurNAc) and N-acetylglucosamine (GlcNAc) residues in peptidoglycan, from either the reducing or the non-reducing ends of the peptidoglycan chains, with concomitant formation of a 1,6-anhydrobond in the MurNAc residue.. Its function is as follows. Murein-degrading enzyme that degrades murein glycan strands and insoluble, high-molecular weight murein sacculi, with the concomitant formation of a 1,6-anhydromuramoyl product. Lytic transglycosylases (LTs) play an integral role in the metabolism of the peptidoglycan (PG) sacculus. Their lytic action creates space within the PG sacculus to allow for its expansion as well as for the insertion of various structures such as secretion systems and flagella. This chain is Membrane-bound lytic murein transglycosylase F, found in Cellvibrio japonicus (strain Ueda107) (Pseudomonas fluorescens subsp. cellulosa).